We begin with the raw amino-acid sequence, 216 residues long: Adenylate kinase (216 aa).

Position 10 to 15 (10 to 15) interacts with ATP; that stretch reads GAGKGT. The tract at residues 30–59 is NMP; it reads STGDMFRAAMKAETELGLQAKSFIDKGALV. AMP is bound by residues Thr31, Arg36, 57-59, 85-88, and Gln92; these read ALV and GFPR. The LID stretch occupies residues 126-163; it reads GRRICKECGATYHLEFNPPAKADVCDKCGGELYQRSDD. Arg127 lines the ATP pocket. Zn(2+)-binding residues include Cys130 and Cys133. 136 to 137 is an ATP binding site; it reads TY. Cys150 and Cys153 together coordinate Zn(2+). AMP contacts are provided by Arg160 and Arg171. Gln199 is a binding site for ATP.

It belongs to the adenylate kinase family. As to quaternary structure, monomer.

Its subcellular location is the cytoplasm. The enzyme catalyses AMP + ATP = 2 ADP. It functions in the pathway purine metabolism; AMP biosynthesis via salvage pathway; AMP from ADP: step 1/1. Its function is as follows. Catalyzes the reversible transfer of the terminal phosphate group between ATP and AMP. Plays an important role in cellular energy homeostasis and in adenine nucleotide metabolism. This Bacillus mycoides (strain KBAB4) (Bacillus weihenstephanensis) protein is Adenylate kinase.